Reading from the N-terminus, the 122-residue chain is Small ribosomal subunit protein uS13 (122 aa).

Residues 95 to 122 are disordered; sequence GLPVHGQRTHTNARTRKGPRRGAVGKKK.

The protein belongs to the universal ribosomal protein uS13 family. Part of the 30S ribosomal subunit. Forms a loose heterodimer with protein S19. Forms two bridges to the 50S subunit in the 70S ribosome.

Its function is as follows. Located at the top of the head of the 30S subunit, it contacts several helices of the 16S rRNA. In the 70S ribosome it contacts the 23S rRNA (bridge B1a) and protein L5 of the 50S subunit (bridge B1b), connecting the 2 subunits; these bridges are implicated in subunit movement. Contacts the tRNAs in the A and P-sites. This is Small ribosomal subunit protein uS13 from Desulfovibrio desulfuricans (strain ATCC 27774 / DSM 6949 / MB).